The primary structure comprises 235 residues: Protein GrpE (235 aa).

The segment covering 1–18 (MTDGNQKPDGNSGEQVTV) has biased composition (polar residues). Disordered stretches follow at residues 1-50 (MTDG…DAAH) and 198-235 (ESVDDGTAVADTAENDQADQGNSADTLGEQAESEPSGS). Basic and acidic residues predominate over residues 19–35 (TDKRRIDPETGEVRHVP).

This sequence belongs to the GrpE family. In terms of assembly, homodimer.

The protein localises to the cytoplasm. Its function is as follows. Participates actively in the response to hyperosmotic and heat shock by preventing the aggregation of stress-denatured proteins, in association with DnaK and GrpE. It is the nucleotide exchange factor for DnaK and may function as a thermosensor. Unfolded proteins bind initially to DnaJ; upon interaction with the DnaJ-bound protein, DnaK hydrolyzes its bound ATP, resulting in the formation of a stable complex. GrpE releases ADP from DnaK; ATP binding to DnaK triggers the release of the substrate protein, thus completing the reaction cycle. Several rounds of ATP-dependent interactions between DnaJ, DnaK and GrpE are required for fully efficient folding. This is Protein GrpE from Mycobacterium bovis (strain BCG / Pasteur 1173P2).